Consider the following 88-residue polypeptide: Large ribosomal subunit protein bL27 (88 aa).

Residues 1–21 (MAHKKGQGSTQNNRDSAGRRL) form a disordered region.

This sequence belongs to the bacterial ribosomal protein bL27 family.

This Helicobacter pylori (strain P12) protein is Large ribosomal subunit protein bL27.